The sequence spans 161 residues: MNLNATILGQAISFVLFVWFCMKYIWPPIILAIETRQKEIKESLTNAKKARDELYILEKKIHQNIIDAKQKASNILNSANKQKVSILEDARNQALEESKKIILNTQSEINIAITHARKNLHKEVVDLSISMAEKIIKKNISKDDNQELLDELVTSLSQVKN.

Residues 11 to 31 form a helical membrane-spanning segment; that stretch reads AISFVLFVWFCMKYIWPPIIL.

This sequence belongs to the ATPase B chain family. F-type ATPases have 2 components, F(1) - the catalytic core - and F(0) - the membrane proton channel. F(1) has five subunits: alpha(3), beta(3), gamma(1), delta(1), epsilon(1). F(0) has three main subunits: a(1), b(2) and c(10-14). The alpha and beta chains form an alternating ring which encloses part of the gamma chain. F(1) is attached to F(0) by a central stalk formed by the gamma and epsilon chains, while a peripheral stalk is formed by the delta and b chains.

The protein localises to the cell membrane. In terms of biological role, f(1)F(0) ATP synthase produces ATP from ADP in the presence of a proton or sodium gradient. F-type ATPases consist of two structural domains, F(1) containing the extramembraneous catalytic core and F(0) containing the membrane proton channel, linked together by a central stalk and a peripheral stalk. During catalysis, ATP synthesis in the catalytic domain of F(1) is coupled via a rotary mechanism of the central stalk subunits to proton translocation. Its function is as follows. Component of the F(0) channel, it forms part of the peripheral stalk, linking F(1) to F(0). In Buchnera aphidicola subsp. Acyrthosiphon pisum (strain APS) (Acyrthosiphon pisum symbiotic bacterium), this protein is ATP synthase subunit b.